Consider the following 401-residue polypeptide: Ureide permease 4 (401 aa).

At 1-10 (MYVVESKAGA) the chain is on the extracellular side. A helical transmembrane segment spans residues 11 to 31 (IGCMILSLCCLGSWPAILTLL). Over 32–40 (ERRGRLPQH) the chain is Cytoplasmic. A helical transmembrane segment spans residues 41–61 (TFLDFATANLLAAIVIAFSLG). The Extracellular portion of the chain corresponds to 62–81 (EIGKSTFLKPDFTTQLPQDN). The helical transmembrane segment at 82–102 (WPSVLLAVAGGVLLSIGNLAT) threads the bilayer. The Cytoplasmic segment spans residues 103 to 104 (QY). Residues 105-125 (AFAFVGLSVTEVITASITVVI) form a helical membrane-spanning segment. The Extracellular segment spans residues 126–141 (GTTLNYFLDNKINKAE). Residues 142–162 (ILFPGVGCFLIAVFLGAAVHA) traverse the membrane as a helical segment. Residues 163 to 231 (SNAADVKEKL…KRAIKVFGKS (69 aa)) are Cytoplasmic-facing. 224-231 (AIKVFGKS) contributes to the ATP binding site. Residues 232-252 (IMIGLFITLFAGISLSLFSPA) form a helical membrane-spanning segment. The Extracellular segment spans residues 253-275 (FNLATNDQWSTLPKGVPKLVVYT). The helical transmembrane segment at 276 to 296 (AFFYFSIAGFLISLILNLIFL) threads the bilayer. Over 297 to 318 (YRPMVGLARSSLKKYIYDSKGR) the chain is Cytoplasmic. A helical transmembrane segment spans residues 319 to 339 (GWAVFAGFLCGFGNGLQFMGG). Topologically, residues 340–344 (QAAGY) are extracellular. Residues 345 to 365 (AAADSVQALPLVSTFWGIVLF) traverse the membrane as a helical segment. The Cytoplasmic segment spans residues 366–374 (GEYRKSSKR). A helical membrane pass occupies residues 375 to 395 (TYALLVSMLAMFVAAVAILMA). The Extracellular segment spans residues 396–401 (SSGHRK).

Belongs to the plant ureide permease (TC 2.A.7.19) family. In terms of tissue distribution, expressed in developing seedlings, flower filaments and stigma, and the top and bottom parts of carpels in siliques.

It is found in the membrane. In terms of biological role, proton-coupled transporter that transports a wide spectrum of oxo derivatives of heterocyclic nitrogen compounds. This is Ureide permease 4 from Arabidopsis thaliana (Mouse-ear cress).